Reading from the N-terminus, the 200-residue chain is Serotonin N-acetyltransferase 2, chloroplastic (200 aa).

The transit peptide at 1-41 directs the protein to the chloroplast; sequence MQMQAARPRVGVRPRGGIRPFPLPTLSFNNNSNRSACACAC. An N-acetyltransferase domain is found at 55 to 195; the sequence is FAVRRSSTGL…MAFYRSRQQI (141 aa).

The protein localises to the cytoplasm. It is found in the plastid. It localises to the chloroplast. It catalyses the reaction serotonin + acetyl-CoA = N-acetylserotonin + CoA + H(+). It carries out the reaction tyramine + acetyl-CoA = N-acetyltyramine + CoA + H(+). The catalysed reaction is tryptamine + acetyl-CoA = N-acetyltryptamine + CoA + H(+). The enzyme catalyses 5-methoxytryptamine + acetyl-CoA = melatonin + CoA + H(+). The protein operates within aromatic compound metabolism; melatonin biosynthesis; melatonin from serotonin: step 1/2. In terms of biological role, catalyzes the N-acetylation of serotonin into N-acetylserotonin, the penultimate step in the synthesis of melatonin. Catalyzes in vitro the N-acetylation of tryptamine to produce N-acetyltryptamine, 5-methoxytryptamine to produce melatonin and tyramine to produce N-acetyltyramine. This Oryza sativa subsp. japonica (Rice) protein is Serotonin N-acetyltransferase 2, chloroplastic.